We begin with the raw amino-acid sequence, 367 residues long: Uroporphyrinogen decarboxylase (367 aa).

At Met-1 the chain carries N-acetylmethionine. Arg-37, Ala-39, Arg-41, Arg-50, Asp-86, Tyr-164, Ser-219, and His-339 together coordinate coproporphyrinogen I. Residues Arg-37, Ala-39, and Arg-41 each contribute to the coproporphyrinogen III site. The coproporphyrinogen III site is built by Asp-86, Tyr-164, Ser-219, and His-339.

Belongs to the uroporphyrinogen decarboxylase family. Homodimer.

The protein resides in the cytoplasm. It localises to the cytosol. The enzyme catalyses uroporphyrinogen III + 4 H(+) = coproporphyrinogen III + 4 CO2. The catalysed reaction is uroporphyrinogen I + 4 H(+) = coproporphyrinogen I + 4 CO2. The protein operates within porphyrin-containing compound metabolism; protoporphyrin-IX biosynthesis; coproporphyrinogen-III from 5-aminolevulinate: step 4/4. Functionally, catalyzes the sequential decarboxylation of the four acetate side chains of uroporphyrinogen to form coproporphyrinogen and participates in the fifth step in the heme biosynthetic pathway. Isomer I or isomer III of uroporphyrinogen may serve as substrate, but only coproporphyrinogen III can ultimately be converted to heme. In vitro also decarboxylates pentacarboxylate porphyrinogen I. The chain is Uroporphyrinogen decarboxylase from Homo sapiens (Human).